The chain runs to 609 residues: UvrABC system protein C (609 aa).

A GIY-YIG domain is found at 15–92; it reads TGSGVYQMQD…IKQFRPRYNV (78 aa). A UVR domain is found at 202-237; it reads DQVIIKLTERMEVTSENLVFEEAAHYRDQIRQLRRL.

The protein belongs to the UvrC family. Interacts with UvrB in an incision complex.

The protein resides in the cytoplasm. Its function is as follows. The UvrABC repair system catalyzes the recognition and processing of DNA lesions. UvrC both incises the 5' and 3' sides of the lesion. The N-terminal half is responsible for the 3' incision and the C-terminal half is responsible for the 5' incision. This is UvrABC system protein C from Coxiella burnetii (strain RSA 493 / Nine Mile phase I).